The chain runs to 234 residues: Purine nucleoside phosphorylase DeoD-type (234 aa).

His5 is a binding site for a purine D-ribonucleoside. Phosphate contacts are provided by residues Gly21, Arg25, Arg44, and 88-91 (RVGT). A purine D-ribonucleoside is bound by residues 178–180 (EME) and 202–203 (SD). Asp203 serves as the catalytic Proton donor.

The protein belongs to the PNP/UDP phosphorylase family. Homohexamer; trimer of homodimers.

It carries out the reaction a purine D-ribonucleoside + phosphate = a purine nucleobase + alpha-D-ribose 1-phosphate. The enzyme catalyses a purine 2'-deoxy-D-ribonucleoside + phosphate = a purine nucleobase + 2-deoxy-alpha-D-ribose 1-phosphate. Its function is as follows. Catalyzes the reversible phosphorolytic breakdown of the N-glycosidic bond in the beta-(deoxy)ribonucleoside molecules, with the formation of the corresponding free purine bases and pentose-1-phosphate. The chain is Purine nucleoside phosphorylase DeoD-type from Lactococcus lactis subsp. cremoris (strain MG1363).